The sequence spans 672 residues: uncharacterized protein (672 aa).

Residues methionine 1 to leucine 10 are compositionally biased toward basic and acidic residues. Positions methionine 1–valine 41 are disordered.

This is an uncharacterized protein from Mycobacterium bovis (strain ATCC BAA-935 / AF2122/97).